A 372-amino-acid polypeptide reads, in one-letter code: UDP-N-acetylglucosamine--N-acetylmuramyl-(pentapeptide) pyrophosphoryl-undecaprenol N-acetylglucosamine transferase (372 aa).

Residues 10–12, N124, R166, S196, I256, and Q301 contribute to the UDP-N-acetyl-alpha-D-glucosamine site; that span reads TGG.

It belongs to the glycosyltransferase 28 family. MurG subfamily.

It is found in the cell membrane. It catalyses the reaction di-trans,octa-cis-undecaprenyl diphospho-N-acetyl-alpha-D-muramoyl-L-alanyl-D-glutamyl-meso-2,6-diaminopimeloyl-D-alanyl-D-alanine + UDP-N-acetyl-alpha-D-glucosamine = di-trans,octa-cis-undecaprenyl diphospho-[N-acetyl-alpha-D-glucosaminyl-(1-&gt;4)]-N-acetyl-alpha-D-muramoyl-L-alanyl-D-glutamyl-meso-2,6-diaminopimeloyl-D-alanyl-D-alanine + UDP + H(+). It functions in the pathway cell wall biogenesis; peptidoglycan biosynthesis. Functionally, cell wall formation. Catalyzes the transfer of a GlcNAc subunit on undecaprenyl-pyrophosphoryl-MurNAc-pentapeptide (lipid intermediate I) to form undecaprenyl-pyrophosphoryl-MurNAc-(pentapeptide)GlcNAc (lipid intermediate II). This Desulforamulus reducens (strain ATCC BAA-1160 / DSM 100696 / MI-1) (Desulfotomaculum reducens) protein is UDP-N-acetylglucosamine--N-acetylmuramyl-(pentapeptide) pyrophosphoryl-undecaprenol N-acetylglucosamine transferase.